A 493-amino-acid chain; its full sequence is Galactose-1-phosphate uridylyltransferase 2 (493 aa).

The protein belongs to the galactose-1-phosphate uridylyltransferase type 2 family.

It localises to the cytoplasm. The catalysed reaction is alpha-D-galactose 1-phosphate + UDP-alpha-D-glucose = alpha-D-glucose 1-phosphate + UDP-alpha-D-galactose. It functions in the pathway carbohydrate metabolism; galactose metabolism. This Streptococcus pneumoniae (strain ATCC BAA-255 / R6) protein is Galactose-1-phosphate uridylyltransferase 2 (galT2).